We begin with the raw amino-acid sequence, 211 residues long: Probable transcription repressor protein RGM1 (211 aa).

The Nuclear localization signal signature appears at 6 to 11; it reads PKRNKD. 2 consecutive C2H2-type zinc fingers follow at residues 19–44 and 50–73; these read YRCV…IRKH and FQCN…SSVH. The segment at 178 to 211 is disordered; it reads NIVELPPDSSDTPASPSKVQSFDQAKDASPNAKK. Low complexity predominate over residues 183–194; it reads PPDSSDTPASPS.

The protein localises to the nucleus. The sequence is that of Probable transcription repressor protein RGM1 (RGM1) from Saccharomyces cerevisiae (strain ATCC 204508 / S288c) (Baker's yeast).